The chain runs to 223 residues: 7-cyano-7-deazaguanine synthase (223 aa).

Residue 11–21 (ISGGMDSALAA) participates in ATP binding. Zn(2+) is bound by residues Cys-189, Cys-197, Cys-200, and Cys-203.

Belongs to the QueC family. Requires Zn(2+) as cofactor.

It carries out the reaction 7-carboxy-7-deazaguanine + NH4(+) + ATP = 7-cyano-7-deazaguanine + ADP + phosphate + H2O + H(+). It participates in purine metabolism; 7-cyano-7-deazaguanine biosynthesis. Functionally, catalyzes the ATP-dependent conversion of 7-carboxy-7-deazaguanine (CDG) to 7-cyano-7-deazaguanine (preQ(0)). This chain is 7-cyano-7-deazaguanine synthase, found in Campylobacter fetus subsp. fetus (strain 82-40).